A 177-amino-acid polypeptide reads, in one-letter code: Phycoerythrin beta subunit (177 aa).

The (2R,3E)-phycocyanobilin site is built by Tyr-18, Lys-28, Asn-35, and Asp-39. The 15,16-dihydrobiliverdin site is built by Cys-50, Asp-54, and Cys-61. The (2R,3E)-phycocyanobilin site is built by Arg-77, Cys-82, Arg-84, and Asp-85. Arg-129, Gln-148, and Lys-149 together coordinate 15,16-dihydrobiliverdin. Residues Pro-154, Gly-156, and Cys-158 each contribute to the (2R,3E)-phycocyanobilin site.

The protein belongs to the phycobiliprotein family. As to quaternary structure, heterotetramer of 2 identical alpha chains and 2 identical beta chains which form 2 alpha-beta heterodimers within the heterotetramer. The two alpha-beta heterodimers are rotated to an open configuration in contrast to the closed configuration found in other cryptophyte species due to the insertion of a single amino acid, 'Asp-65', in a conserved region of the alpha chain. In the open form, the central chromophores are not in physical contact but are separated by a water-filled channel. Post-translationally, contains three phycocyanobilin chromophores and one 15,16-dihydrobiliverdin chromophore with binding of the phycocyanobilin chromophores mediated by both the alpha and beta subunits.

The protein resides in the plastid. It is found in the chloroplast thylakoid membrane. Light-harvesting photosynthetic bile pigment-protein from the phycobiliprotein complex. The chain is Phycoerythrin beta subunit from Hemiselmis virescens.